Reading from the N-terminus, the 435-residue chain is Glutamate-1-semialdehyde 2,1-aminomutase (435 aa).

Lys-266 is subject to N6-(pyridoxal phosphate)lysine.

This sequence belongs to the class-III pyridoxal-phosphate-dependent aminotransferase family. HemL subfamily. In terms of assembly, homodimer. It depends on pyridoxal 5'-phosphate as a cofactor.

It is found in the cytoplasm. The catalysed reaction is (S)-4-amino-5-oxopentanoate = 5-aminolevulinate. It functions in the pathway porphyrin-containing compound metabolism; protoporphyrin-IX biosynthesis; 5-aminolevulinate from L-glutamyl-tRNA(Glu): step 2/2. The polypeptide is Glutamate-1-semialdehyde 2,1-aminomutase (Coxiella burnetii (strain CbuG_Q212) (Coxiella burnetii (strain Q212))).